The primary structure comprises 828 residues: G-type lectin S-receptor-like serine/threonine-protein kinase At2g19130 (828 aa).

Residues 1 to 22 (MVSFLTLTSFFFICFFIHGSSA) form the signal peptide. Positions 23-146 (VDTISGDFTL…GSSLSANVLW (124 aa)) constitute a Bulb-type lectin domain. The Extracellular portion of the chain corresponds to 23–439 (VDTISGDFTL…GASGKSNNKG (417 aa)). 6 N-linked (GlcNAc...) asparagine glycosylation sites follow: asparagine 85, asparagine 113, asparagine 203, asparagine 234, asparagine 240, and asparagine 255. Positions 286 to 322 (PRQQCQVYRYCGSFGICSDKSEPFCRCPQGFRPMSQK) constitute an EGF-like domain. Intrachain disulfides connect cysteine 290–cysteine 302, cysteine 296–cysteine 310, cysteine 372–cysteine 394, and cysteine 376–cysteine 382. Residues 341–422 (CSRGDINQFF…EGNIFYLRLA (82 aa)) form the PAN domain. The chain crosses the membrane as a helical span at residues 440–460 (LIFGAVLGSLGVIVLVLLVVI). Residues 461–828 (LILRYRRRKR…KKMTNDNSSA (368 aa)) lie on the Cytoplasmic side of the membrane. The 278-residue stretch at 493–770 (KNFSDKLGGG…QVVQILEGVL (278 aa)) folds into the Protein kinase domain. Residues 499 to 507 (LGGGGFGSV) and lysine 521 each bind ATP. At serine 527 the chain carries Phosphoserine. Residues 582–600 (VEEKIVLGWKLRFQIALGT) are caM-binding. The active-site Proton acceptor is aspartate 619. The residue at position 653 (threonine 653) is a Phosphothreonine. The tract at residues 796–828 (ESSSSSSHNSSQNHKHSSSSSSSKKMTNDNSSA) is disordered. The segment covering 797–828 (SSSSSSHNSSQNHKHSSSSSSSKKMTNDNSSA) has biased composition (low complexity). Serine 815 bears the Phosphoserine mark.

The protein belongs to the protein kinase superfamily. Ser/Thr protein kinase family.

Its subcellular location is the cell membrane. The enzyme catalyses L-seryl-[protein] + ATP = O-phospho-L-seryl-[protein] + ADP + H(+). The catalysed reaction is L-threonyl-[protein] + ATP = O-phospho-L-threonyl-[protein] + ADP + H(+). In Arabidopsis thaliana (Mouse-ear cress), this protein is G-type lectin S-receptor-like serine/threonine-protein kinase At2g19130.